The sequence spans 179 residues: Interferon lambda-4 (179 aa).

An N-terminal signal peptide occupies residues 1–21 (MRPSVWAAVAAGLWVLCTVIA). Positions 130-149 (SSRKVPGAQKRRHKPRRADS) are disordered.

Belongs to the lambda interferon family.

It is found in the cytoplasm. It localises to the secreted. Functionally, cytokine that may trigger an antiviral response activating the JAK-STAT pathway and up-regulating specifically some interferon-stimulated genes. In Homo sapiens (Human), this protein is Interferon lambda-4 (IFNL4).